Here is a 400-residue protein sequence, read N- to C-terminus: Probable vacuolar protease A (400 aa).

The first 18 residues, Met1 to Ala18, serve as a signal peptide directing secretion. The propeptide at Lys19–Glu72 is activation peptide. Residues Tyr87–Ala397 form the Peptidase A1 domain. Asp105 is a catalytic residue. The cysteines at positions 118 and 123 are disulfide-linked. Residue Asn140 is glycosylated (N-linked (GlcNAc...) asparagine). Residue Asp289 is part of the active site. A disulfide bridge links Cys323 with Cys356. Asn340 carries an N-linked (GlcNAc...) asparagine glycan.

Belongs to the peptidase A1 family.

It localises to the vacuole lumen. The protein resides in the secreted. It carries out the reaction Hydrolysis of proteins with broad specificity for peptide bonds. Cleaves -Leu-Leu-|-Val-Tyr- bond in a synthetic substrate. Does not act on esters of Tyr or Arg.. Functionally, vacuolar aspartic endopeptidase which is probably also secreted and contributes to virulence. This Arthroderma benhamiae (strain ATCC MYA-4681 / CBS 112371) (Trichophyton mentagrophytes) protein is Probable vacuolar protease A (PEP2).